A 226-amino-acid polypeptide reads, in one-letter code: RNA pyrophosphohydrolase (226 aa).

In terms of domain architecture, Nudix hydrolase spans 6 to 149 (GFRPNVGIIL…KRGVYEMALT (144 aa)). Positions 38-59 (GGIDRGETPEQAMFRELHEEVG) match the Nudix box motif. The segment at 197–226 (MELPPGASFDPDPRTGDGDPGMPGIHKPAG) is disordered.

The protein belongs to the Nudix hydrolase family. RppH subfamily. It depends on a divalent metal cation as a cofactor.

Accelerates the degradation of transcripts by removing pyrophosphate from the 5'-end of triphosphorylated RNA, leading to a more labile monophosphorylated state that can stimulate subsequent ribonuclease cleavage. In Paracidovorax citrulli (strain AAC00-1) (Acidovorax citrulli), this protein is RNA pyrophosphohydrolase.